The chain runs to 157 residues: MARALTTDESHIHKTLGAKVGLEEVEAVERIAIVVKDTRYSVESPVAYRIKGTDSILIFGDLGSPVNLHQLKRMYEDSIRSSKDQEGPGLYDEIHSDPQEDGVKEAEEITVDPSDERLSEEDIKLISSQVKASRNDIIKALVESEYDVVDAMMKLTK.

One can recognise an NAC-A/B domain in the interval 6–71; sequence TTDESHIHKT…LGSPVNLHQL (66 aa). A compositionally biased stretch (basic and acidic residues) spans 81–107; the sequence is SSKDQEGPGLYDEIHSDPQEDGVKEAE. Residues 81–116 are disordered; sequence SSKDQEGPGLYDEIHSDPQEDGVKEAEEITVDPSDE. One can recognise a UBA domain in the interval 118–157; that stretch reads LSEEDIKLISSQVKASRNDIIKALVESEYDVVDAMMKLTK.

It belongs to the NAC-alpha family.

The protein resides in the cytoplasm. It is found in the nucleus. Functionally, may be involved in mitochondrial protein import by enhancing productive ribosome interactions with the outer mitochondrial membrane and blocks the inappropriate interaction of ribosomes translating non-secretory nascent polypeptides with translocation sites in the membrane of the endoplasmic reticulum. EGD2 may also be involved in transcription regulation. In Encephalitozoon cuniculi (strain GB-M1) (Microsporidian parasite), this protein is Nascent polypeptide-associated complex subunit alpha (EGD2).